The following is a 304-amino-acid chain: Quinolinate synthase (304 aa).

2 residues coordinate iminosuccinate: H24 and S41. Residue C86 coordinates [4Fe-4S] cluster. Iminosuccinate contacts are provided by residues 112-114 (YVN) and S129. A [4Fe-4S] cluster-binding site is contributed by C171. Iminosuccinate contacts are provided by residues 197–199 (HPE) and T214. C259 contacts [4Fe-4S] cluster.

Belongs to the quinolinate synthase family. Type 2 subfamily. [4Fe-4S] cluster is required as a cofactor.

The protein localises to the cytoplasm. It carries out the reaction iminosuccinate + dihydroxyacetone phosphate = quinolinate + phosphate + 2 H2O + H(+). Its pathway is cofactor biosynthesis; NAD(+) biosynthesis; quinolinate from iminoaspartate: step 1/1. Functionally, catalyzes the condensation of iminoaspartate with dihydroxyacetone phosphate to form quinolinate. This is Quinolinate synthase from Methanosarcina barkeri (strain Fusaro / DSM 804).